Consider the following 444-residue polypeptide: Alanyl-tRNA editing protein Aarsd1 (444 aa).

Histidine 109 and histidine 113 together coordinate Zn(2+). Residue serine 174 is modified to Phosphoserine. Zn(2+) contacts are provided by cysteine 209 and histidine 213.

Belongs to the class-II aminoacyl-tRNA synthetase family. Alax-L subfamily. The cofactor is Zn(2+).

The protein resides in the cytoplasm. Functions in trans to edit the amino acid moiety from incorrectly charged tRNA(Ala). This Bos taurus (Bovine) protein is Alanyl-tRNA editing protein Aarsd1 (AARSD1).